Reading from the N-terminus, the 295-residue chain is uncharacterized protein (295 aa).

The region spanning 2–226 is the ABC transporter domain; sequence LSIESLCKSY…QQTNVFTLSV (225 aa). 34–41 contributes to the ATP binding site; the sequence is GPNGAGKT.

Belongs to the ABC transporter superfamily.

This is an uncharacterized protein from Bacillus subtilis (strain 168).